The chain runs to 77 residues: Secapin (77 aa).

The signal sequence occupies residues 1–32 (MKNYSKNATHLITVLLFSFVVILLIIPSKCEA). Positions 33-52 (VSNDMQPLEARSADLIPEPR) are excised as a propeptide. A disulfide bond links cysteine 61 and cysteine 72.

It belongs to the secapin family. Expressed by the venom gland.

The protein localises to the secreted. In terms of biological role, nontoxic peptide. The sequence is that of Secapin from Vespa velutina nigrithorax (Hornet).